A 714-amino-acid polypeptide reads, in one-letter code: Cyclomaltodextrin glucanotransferase (714 aa).

An N-terminal signal peptide occupies residues 1–27; sequence MKSRYKRLTSLALSLSMALGISLPAWA. Residues 28–165 are A1; it reads SPDTSVDNKV…NIKVVIDFAP (138 aa). Ca(2+) contacts are provided by Asp54, Asn59, Asn60, Gly78, and Asp80. Residue 127 to 128 participates in substrate binding; the sequence is YW. A Ca(2+)-binding site is contributed by Asn166. The tract at residues 166 to 229 is b; that stretch reads NHTSPADRDN…NLYDLADINH (64 aa). His167 serves as a coordination point for substrate. Position 217 (Ile217) interacts with Ca(2+). Substrate is bound at residue 220-223; that stretch reads NLYD. A Ca(2+)-binding site is contributed by Asp226. Positions 230–434 are A2; the sequence is NNNAMDAYFK…LRKSNPAIAY (205 aa). Arg254 lines the substrate pocket. Residue Asp256 is the Nucleophile of the active site. 259 to 260 is a substrate binding site; it reads KH. His260 is a binding site for Ca(2+). Glu285 functions as the Proton donor in the catalytic mechanism. Substrate-binding residues include His355, Asp399, and Arg403. The tract at residues 435–523 is c; that stretch reads GTTTERWVNN…GTAVWQYTAP (89 aa). A d region spans residues 524-610; that stretch reads ETSPAIGNVG…SNTFKSFNVL (87 aa). The region spanning 527–607 is the IPT/TIG domain; that stretch reads PAIGNVGPTM…GTASNTFKSF (81 aa). The CBM20 domain maps to 609 to 714; sequence VLTGDQVTVR…VGTVTVDWQN (106 aa). The interval 611-714 is e; that stretch reads TGDQVTVRFL…VGTVTVDWQN (104 aa).

The protein belongs to the glycosyl hydrolase 13 family. As to quaternary structure, monomer. Ca(2+) is required as a cofactor.

The protein localises to the secreted. The enzyme catalyses Cyclizes part of a (1-&gt;4)-alpha-D-glucan chain by formation of a (1-&gt;4)-alpha-D-glucosidic bond.. This is Cyclomaltodextrin glucanotransferase (cgtM) from Paenibacillus macerans (Bacillus macerans).